Reading from the N-terminus, the 373-residue chain is 2-aminoethylphosphonate--pyruvate transaminase (373 aa).

Lysine 191 carries the N6-(pyridoxal phosphate)lysine modification.

The protein belongs to the class-V pyridoxal-phosphate-dependent aminotransferase family. PhnW subfamily. In terms of assembly, homodimer. It depends on pyridoxal 5'-phosphate as a cofactor.

The enzyme catalyses (2-aminoethyl)phosphonate + pyruvate = phosphonoacetaldehyde + L-alanine. Functionally, involved in phosphonate degradation. The sequence is that of 2-aminoethylphosphonate--pyruvate transaminase from Burkholderia ambifaria (strain MC40-6).